Reading from the N-terminus, the 402-residue chain is tRNA pseudouridine synthase Pus10 (402 aa).

The Nucleophile role is filled by Asp-215. Positions 370-402 (ERGGHPGARGGTRRRPRKGPARPAGGRDRPRKT) are disordered. The segment covering 380 to 389 (GTRRRPRKGP) has biased composition (basic residues).

It belongs to the pseudouridine synthase Pus10 family.

It carries out the reaction uridine(54) in tRNA = pseudouridine(54) in tRNA. It catalyses the reaction uridine(55) in tRNA = pseudouridine(55) in tRNA. Responsible for synthesis of pseudouridine from uracil-54 and uracil-55 in the psi GC loop of transfer RNAs. The polypeptide is tRNA pseudouridine synthase Pus10 (Cenarchaeum symbiosum (strain A)).